The sequence spans 342 residues: UDP-N-acetylglucosamine transporter YEA4 (342 aa).

Over 1–6 the chain is Cytoplasmic; sequence MWNSLK. A helical membrane pass occupies residues 7–27; sequence AFALVFGGCCSNVITFETLMS. Over 28–35 the chain is Lumenal; the sequence is NETGSINN. A helical membrane pass occupies residues 36 to 56; the sequence is LITFCQFLFVTCQGLPEFLDV. Topologically, residues 57–61 are cytoplasmic; sequence HQPFP. Residues 62–82 form a helical membrane-spanning segment; the sequence is YFKPLKTPLHVYVITVVLFYI. The Lumenal segment spans residues 83–96; the sequence is SSTTNNNVFKYNIS. A helical membrane pass occupies residues 97 to 117; it reads IPIHIVFRCFGTVITMFTCWL. Residues 118–123 lie on the Cytoplasmic side of the membrane; that stretch reads LNGRKY. The helical transmembrane segment at 124-144 threads the bilayer; sequence TKIQILSTLFLTIGAIIASLF. Topologically, residues 145 to 168 are lumenal; it reads KDADFRYQDLKLQAWKIGSDQSVD. A helical transmembrane segment spans residues 169-189; sequence LTFIFGICILVLSSFTSSLLS. The Cytoplasmic portion of the chain corresponds to 190–253; the sequence is AYNERTYQKY…GGKILVPREE (64 aa). Residues 254–274 form a helical membrane-spanning segment; the sequence is TLLLFNVLTQYFCVKGVNILA. The Lumenal segment spans residues 275–307; that stretch reads SKTNALTLSITLLVRKFISLLLSVRLFDNNLSY. A helical membrane pass occupies residues 308-328; that stretch reads TGYIGVYLVFFGAFIYSLGSI. Topologically, residues 329–342 are cytoplasmic; that stretch reads HPRQNDKGAIKKSK.

The protein belongs to the nucleotide-sugar transporter family. SLC35B subfamily.

Its subcellular location is the endoplasmic reticulum. It is found in the endoplasmic reticulum membrane. Functionally, sugar transporter that specifically mediates the transport of UDP-N-acetylglucosamine (UDP-GlcNAc) and is required for cell wall chitin synthesis. This chain is UDP-N-acetylglucosamine transporter YEA4 (YEA4), found in Saccharomyces cerevisiae (strain ATCC 204508 / S288c) (Baker's yeast).